Reading from the N-terminus, the 921-residue chain is Isoleucine--tRNA ligase (921 aa).

Residues 57 to 67 carry the 'HIGH' region motif; the sequence is PYANGNIHVGT. L-isoleucyl-5'-AMP is bound at residue Glu551. The short motif at 592 to 596 is the 'KMSKS' region element; it reads KMSKS. ATP is bound at residue Lys595. Zn(2+) contacts are provided by Cys885, Cys888, Cys905, and Cys908.

This sequence belongs to the class-I aminoacyl-tRNA synthetase family. IleS type 1 subfamily. As to quaternary structure, monomer. The cofactor is Zn(2+).

The protein resides in the cytoplasm. The catalysed reaction is tRNA(Ile) + L-isoleucine + ATP = L-isoleucyl-tRNA(Ile) + AMP + diphosphate. Its function is as follows. Catalyzes the attachment of isoleucine to tRNA(Ile). As IleRS can inadvertently accommodate and process structurally similar amino acids such as valine, to avoid such errors it has two additional distinct tRNA(Ile)-dependent editing activities. One activity is designated as 'pretransfer' editing and involves the hydrolysis of activated Val-AMP. The other activity is designated 'posttransfer' editing and involves deacylation of mischarged Val-tRNA(Ile). The chain is Isoleucine--tRNA ligase from Kosmotoga olearia (strain ATCC BAA-1733 / DSM 21960 / TBF 19.5.1).